The sequence spans 373 residues: Thyroid hormone receptor beta (373 aa).

Residues 1-18 (MPSSMSGYIPSYLDKDEL) are modulating. Zn(2+) contacts are provided by C19, C22, C36, C39, C57, C63, C73, and C76. NR C4-type zinc fingers lie at residues 19 to 39 (CVVC…CEGC) and 57 to 81 (CKYE…FKKC). A DNA-binding region (nuclear receptor) is located at residues 19–93 (CVVCGDKATG…VGMATDLVLD (75 aa)). An NR LBD domain is found at 129-373 (EEWELIQVVT…PPLFLEVFED (245 aa)). The 3,3',5-triiodo-L-thyronine site is built by R194, N243, and H347. Residues R194, N243, and H347 each contribute to the L-thyroxine site.

Belongs to the nuclear hormone receptor family. NR1 subfamily.

It localises to the nucleus. Nuclear hormone receptor that can act as a repressor or activator of transcription. High affinity receptor for thyroid hormones, including triiodothyronine and thyroxine. The protein is Thyroid hormone receptor beta (thrb) of Aquarana catesbeiana (American bullfrog).